A 371-amino-acid chain; its full sequence is Ferrochelatase (371 aa).

Positions 218 and 299 each coordinate Fe cation.

The protein belongs to the ferrochelatase family.

Its subcellular location is the cytoplasm. It carries out the reaction heme b + 2 H(+) = protoporphyrin IX + Fe(2+). It functions in the pathway porphyrin-containing compound metabolism; protoheme biosynthesis; protoheme from protoporphyrin-IX: step 1/1. Functionally, catalyzes the ferrous insertion into protoporphyrin IX. This Cupriavidus taiwanensis (strain DSM 17343 / BCRC 17206 / CCUG 44338 / CIP 107171 / LMG 19424 / R1) (Ralstonia taiwanensis (strain LMG 19424)) protein is Ferrochelatase.